Here is a 529-residue protein sequence, read N- to C-terminus: ADP,ATP carrier protein 1 (529 aa).

12 helical membrane passes run 24–44, 63–83, 93–113, 124–144, 149–169, 184–204, 220–240, 284–304, 322–342, 356–376, 381–401, and 463–483; these read LKKV…YTIL, IPFI…LIYA, ALFY…PLVI, DFAD…IAML, FAAF…LMFW, FYAL…PAIV, WGVT…IIAA, YMLL…LVEV, AFMG…MLFI, ALVT…LVIF, TGLV…VGAV, and ISAM…VWLT. Residues 509–520 are compositionally biased toward low complexity; sequence AAEKEASPAAKE. Residues 509–529 are disordered; sequence AAEKEASPAAKEVSPAIEGVS.

Belongs to the ADP/ATP translocase tlc family.

The protein resides in the cell membrane. This is ADP,ATP carrier protein 1 (tlcA) from Chlamydia muridarum (strain MoPn / Nigg).